Consider the following 530-residue polypeptide: ATP-dependent RNA helicase DBP3 (530 aa).

Basic and acidic residues predominate over residues 1-20 (MSKDEIKDKKRKSEEYEVVD). The disordered stretch occupies residues 1–77 (MSKDEIKDKK…VASVSTSSTV (77 aa)). Residues 19–58 (VDKKKHKKDKKDKKEKKDKKEKKLKKDKKDKKDKKETKSE) are a coiled coil. The span at 21–50 (KKKHKKDKKDKKEKKDKKEKKLKKDKKDKK) shows a compositional bias: basic residues. Residues 67-77 (SVASVSTSSTV) are compositionally biased toward low complexity. Positions 117 to 143 (LSFSHISLDSRIQAEISKFPKPTPIQA) match the Q motif motif. One can recognise a Helicase ATP-binding domain in the interval 146-322 (WPYLLAGKDV…STFMNSPIKV (177 aa)). 159–166 (AETGSGKT) contributes to the ATP binding site. The DEAD box motif lies at 269–272 (DEAD). In terms of domain architecture, Helicase C-terminal spans 351 to 500 (KLLELLKKYQ…PVPEELKKFG (150 aa)).

Belongs to the DEAD box helicase family. DDX5/DBP2 subfamily.

The protein resides in the nucleus. It is found in the nucleolus. It catalyses the reaction ATP + H2O = ADP + phosphate + H(+). ATP-dependent RNA helicase required for 60S ribosomal subunit synthesis. Involved in efficient pre-rRNA processing, predominantly at site A3, which is necessary for the normal formation of 25S and 5.8S rRNAs. This Vanderwaltozyma polyspora (strain ATCC 22028 / DSM 70294 / BCRC 21397 / CBS 2163 / NBRC 10782 / NRRL Y-8283 / UCD 57-17) (Kluyveromyces polysporus) protein is ATP-dependent RNA helicase DBP3 (DBP3).